The chain runs to 832 residues: Subtilisin-like protease SBT2.1 (832 aa).

The N-terminal stretch at 1–24 (MDESSLVRFVFLLCLVSSSVFCLA) is a signal peptide. The propeptide at 25–138 (ESDQNATVSS…VVLDFLVEKA (114 aa)) is activation peptide. 2 N-linked (GlcNAc...) asparagine glycosylation sites follow: asparagine 29 and asparagine 73. An Inhibitor I9 domain is found at 36 to 136 (VYIVTLKDRP…ENVVLDFLVE (101 aa)). The region spanning 145-684 (FLGLPRGAWL…SGFVNATAAL (540 aa)) is the Peptidase S8 domain. The active-site Charge relay system is aspartate 172. An N-linked (GlcNAc...) asparagine glycan is attached at asparagine 233. Histidine 247 acts as the Charge relay system in catalysis. Residues asparagine 272, asparagine 315, asparagine 390, asparagine 417, asparagine 470, asparagine 515, and asparagine 522 are each glycosylated (N-linked (GlcNAc...) asparagine). The region spanning 408-503 (LVLATHALRN…MDIPGILISS (96 aa)) is the PA domain. Serine 609 functions as the Charge relay system in the catalytic mechanism. Asparagine 679, asparagine 705, asparagine 713, asparagine 723, asparagine 760, and asparagine 801 each carry an N-linked (GlcNAc...) asparagine glycan.

The protein belongs to the peptidase S8 family.

It is found in the secreted. The chain is Subtilisin-like protease SBT2.1 from Arabidopsis thaliana (Mouse-ear cress).